Consider the following 137-residue polypeptide: Nucleoside diphosphate kinase (137 aa).

ATP contacts are provided by K10, F59, R87, T93, R104, and N114. The Pros-phosphohistidine intermediate role is filled by H117.

It belongs to the NDK family. Homotetramer. Requires Mg(2+) as cofactor.

It is found in the cytoplasm. The catalysed reaction is a 2'-deoxyribonucleoside 5'-diphosphate + ATP = a 2'-deoxyribonucleoside 5'-triphosphate + ADP. It carries out the reaction a ribonucleoside 5'-diphosphate + ATP = a ribonucleoside 5'-triphosphate + ADP. Its function is as follows. Major role in the synthesis of nucleoside triphosphates other than ATP. The ATP gamma phosphate is transferred to the NDP beta phosphate via a ping-pong mechanism, using a phosphorylated active-site intermediate. This chain is Nucleoside diphosphate kinase, found in Streptomyces griseus subsp. griseus (strain JCM 4626 / CBS 651.72 / NBRC 13350 / KCC S-0626 / ISP 5235).